Consider the following 82-residue polypeptide: Putative antitoxin Saci_0468 (82 aa).

This sequence belongs to the UPF0330 family.

Its function is as follows. Possibly the antitoxin component of a type II toxin-antitoxin (TA) system. In Sulfolobus acidocaldarius (strain ATCC 33909 / DSM 639 / JCM 8929 / NBRC 15157 / NCIMB 11770), this protein is Putative antitoxin Saci_0468.